We begin with the raw amino-acid sequence, 305 residues long: UDP-3-O-acyl-N-acetylglucosamine deacetylase (305 aa).

Zn(2+) contacts are provided by His79, His238, and Asp242. His265 acts as the Proton donor in catalysis.

Belongs to the LpxC family. It depends on Zn(2+) as a cofactor.

It carries out the reaction a UDP-3-O-[(3R)-3-hydroxyacyl]-N-acetyl-alpha-D-glucosamine + H2O = a UDP-3-O-[(3R)-3-hydroxyacyl]-alpha-D-glucosamine + acetate. The protein operates within glycolipid biosynthesis; lipid IV(A) biosynthesis; lipid IV(A) from (3R)-3-hydroxytetradecanoyl-[acyl-carrier-protein] and UDP-N-acetyl-alpha-D-glucosamine: step 2/6. Catalyzes the hydrolysis of UDP-3-O-myristoyl-N-acetylglucosamine to form UDP-3-O-myristoylglucosamine and acetate, the committed step in lipid A biosynthesis. The protein is UDP-3-O-acyl-N-acetylglucosamine deacetylase of Haemophilus influenzae (strain PittGG).